A 249-amino-acid chain; its full sequence is Adenosylcobinamide-GDP ribazoletransferase (249 aa).

A run of 6 helical transmembrane segments spans residues 32–52, 53–73, 107–127, 136–156, 190–210, and 224–244; these read MVAF…TWFG, ATWL…WGAI, IGTM…LFVL, ALIV…FWFP, LLWW…IIIA, and TYGA…AALV.

Belongs to the CobS family. Mg(2+) serves as cofactor.

It is found in the cell membrane. The enzyme catalyses alpha-ribazole + adenosylcob(III)inamide-GDP = adenosylcob(III)alamin + GMP + H(+). The catalysed reaction is alpha-ribazole 5'-phosphate + adenosylcob(III)inamide-GDP = adenosylcob(III)alamin 5'-phosphate + GMP + H(+). It functions in the pathway cofactor biosynthesis; adenosylcobalamin biosynthesis; adenosylcobalamin from cob(II)yrinate a,c-diamide: step 7/7. Joins adenosylcobinamide-GDP and alpha-ribazole to generate adenosylcobalamin (Ado-cobalamin). Also synthesizes adenosylcobalamin 5'-phosphate from adenosylcobinamide-GDP and alpha-ribazole 5'-phosphate. This is Adenosylcobinamide-GDP ribazoletransferase from Herpetosiphon aurantiacus (strain ATCC 23779 / DSM 785 / 114-95).